The following is a 231-amino-acid chain: 4-hydroxy-tetrahydrodipicolinate reductase (231 aa).

NAD(+)-binding positions include aspartate 33, 68-70 (CTT), and 92-95 (SSNT). Histidine 124 (proton donor/acceptor) is an active-site residue. Histidine 125 contributes to the (S)-2,3,4,5-tetrahydrodipicolinate binding site. Lysine 128 functions as the Proton donor in the catalytic mechanism. (S)-2,3,4,5-tetrahydrodipicolinate is bound at residue 134–135 (GT).

It belongs to the DapB family.

Its subcellular location is the cytoplasm. The enzyme catalyses (S)-2,3,4,5-tetrahydrodipicolinate + NAD(+) + H2O = (2S,4S)-4-hydroxy-2,3,4,5-tetrahydrodipicolinate + NADH + H(+). It catalyses the reaction (S)-2,3,4,5-tetrahydrodipicolinate + NADP(+) + H2O = (2S,4S)-4-hydroxy-2,3,4,5-tetrahydrodipicolinate + NADPH + H(+). The protein operates within amino-acid biosynthesis; L-lysine biosynthesis via DAP pathway; (S)-tetrahydrodipicolinate from L-aspartate: step 4/4. Its function is as follows. Catalyzes the conversion of 4-hydroxy-tetrahydrodipicolinate (HTPA) to tetrahydrodipicolinate. The chain is 4-hydroxy-tetrahydrodipicolinate reductase from Brachyspira hyodysenteriae (strain ATCC 49526 / WA1).